A 973-amino-acid chain; its full sequence is Nuclear factor NF-kappa-B p105 subunit (973 aa).

Residues 38–245 (ADGPYLQILE…DAIYDSKAPN (208 aa)) form the RHD domain. Residue C60 is modified to S-nitrosocysteine; alternate. A lipid anchor (S-(15-deoxy-Delta12,14-prostaglandin J2-9-yl)cysteine; alternate) is attached at C60. A Glycyl lysine isopeptide (Lys-Gly) (interchain with G-Cter in SUMO2) cross-link involves residue K324. Position 336 is a phosphoserine (S336). The Nuclear localization signal signature appears at 359-364 (QRKRQK). The GRR stretch occupies residues 371-394 (DSFGGGSGAGAGGGGMFGSGGGGG). Residues 434–467 (TINTKFKNEPRDCAKSDDREILNPPEKETQGEGP) are disordered. The segment at 435–973 (INTKFKNEPR…GQDGPIEGKI (539 aa)) is interaction with CFLAR. Residues 439 to 463 (FKNEPRDCAKSDDREILNPPEKETQ) show a composition bias toward basic and acidic residues. At K440 the chain carries N6-acetyllysine. S449 is subject to Phosphoserine. 6 ANK repeats span residues 540-570 (NGDS…SISD), 579-608 (LYQT…DLSL), 612-641 (WGNS…AALL), 648-677 (EGLN…EVNA), 682-711 (SGRT…ALVD), and 716-745 (DGTT…DPLV). The tract at residues 648 to 682 (EGLNAIHIAVMSNSLSCLQLLVAAGAEVNAQEQKS) is essential for interaction with HIF1AN. A (3S)-3-hydroxyasparagine; by HIF1AN modification is found at N676. A Phosphoserine modification is found at S757. The ANK 7 repeat unit spans residues 769-799 (PGTTPLDMAANWQVFDILNGKPYEPVFTSDD). Residues 803–890 (QGDIKQLTED…EAIEVIQAAF (88 aa)) form the Death domain. Phosphoserine is present on S898. S912 is subject to Phosphoserine; by GSK3-beta; in vitro. S928 carries the phosphoserine modification. S932 and S937 each carry phosphoserine; by IKKB. Residue S942 is modified to Phosphoserine. T948 carries the phosphothreonine modification.

In terms of assembly, component of the NF-kappa-B p65-p50 complex. Homodimer; component of the NF-kappa-B p50-p50 complex. Component of the NF-kappa-B p105-p50 complex. Component of the NF-kappa-B p50-c-Rel complex. Component of a complex consisting of the NF-kappa-B p50-p50 homodimer and BCL3. Also interacts with MAP3K8. NF-kappa-B p50 subunit interacts with NCOA3 coactivator, which may coactivate NF-kappa-B dependent expression via its histone acetyltransferase activity. Interacts with TSC22D3; this interaction prevents nuclear translocation and DNA-binding. Interacts with SPAG9 and UNC5CL. NFKB1/p105 interacts with CFLAR; the interaction inhibits p105 processing into p50. NFKB1/p105 forms a ternary complex with MAP3K8 and TNIP2. Interacts with GSK3B; the interaction prevents processing of p105 to p50. NFKB1/p50 interacts with NFKBIE. NFKB1/p50 interacts with NFKBIZ. Nuclear factor NF-kappa-B p50 subunit interacts with NFKBID. Directly interacts with MEN1. Interacts with HIF1AN. Interacts with FEM1A; interaction is direct. Generation of the NF-kappa-B p50 (Nuclear factor NF-kappa-B p50 subunit) transcription factor takes place both cotranslationally and post-translationally via non-mutually exclusive mechanisms. A cotranslational processing allows the production of both p50 and p105 (Nuclear factor NF-kappa-B p105 subunit) from a single NFKB1 mRNA. While translation occurs, the particular unfolded structure after the GRR repeat region acts as a substrate for the proteasome, promoting degradation of the C-terminus. The GRR acts as a proteasomal 'stop signal', protecting the region upstream of the GRR from degradation and promoting generation of p50. It is unclear if limited proteasome degradation during cotranslational processing depends on ubiquitination. NF-kappa-B p50 is also generated post-translationally following ubiquitination by the KPC complex, leading to limited processing by the proteasome downstream of the GRR region, thereby generating p50. Post-translationally, phosphorylation at the C-terminus by IKBKB/IKKB acts as a signal for ubiquitination and promotes either complete degradation or processing to generate the NF-kappa-B p50 (Nuclear factor NF-kappa-B p50 subunit). Phosphorylation at Ser-912 primes p105 for proteolytic processing in response to TNF-alpha stimulation. Phosphorylation at Ser-928, Ser-932 and Ser-937 are required for BTRC/BTRCP-mediated ubiquitination and proteolysis. Phosphorylation at Ser-932 is also required for ubiquitination by the KPC complex and limited processing to generate NF-kappa-B p50 (Nuclear factor NF-kappa-B p50 subunit). In terms of processing, polyubiquitinated at multiple Lys residues in the C-terminus. Polyubiquitinated by the SCF(FBXW11) and SCF(BTRC) complexes following phosphorylation at Ser-928, Ser-932 and Ser-937, leading to its complete degradation. In contrast, polyubiquitination by the KPC complex following phosphorylation at Ser-932 leads to limited proteosomal processing and generation of the active NF-kappa-B p50 (Nuclear factor NF-kappa-B p50 subunit). S-nitrosylation of Cys-60 affects DNA binding. Post-translationally, the covalent modification of cysteine by 15-deoxy-Delta12,14-prostaglandin-J2 is autocatalytic and reversible. It may occur as an alternative to other cysteine modifications, such as S-nitrosylation and S-palmitoylation.

Its subcellular location is the cytoplasm. The protein resides in the nucleus. NF-kappa-B is a pleiotropic transcription factor present in almost all cell types and is the endpoint of a series of signal transduction events that are initiated by a vast array of stimuli related to many biological processes such as inflammation, immunity, differentiation, cell growth, tumorigenesis and apoptosis. NF-kappa-B is a homo- or heterodimeric complex formed by the Rel-like domain-containing proteins RELA/p65, RELB, NFKB1/p105, NFKB1/p50, REL and NFKB2/p52 and the heterodimeric p65-p50 complex appears to be most abundant one. The dimers bind at kappa-B sites in the DNA of their target genes and the individual dimers have distinct preferences for different kappa-B sites that they can bind with distinguishable affinity and specificity. Different dimer combinations act as transcriptional activators or repressors, respectively. NF-kappa-B is controlled by various mechanisms of post-translational modification and subcellular compartmentalization as well as by interactions with other cofactors or corepressors. NF-kappa-B complexes are held in the cytoplasm in an inactive state complexed with members of the NF-kappa-B inhibitor (I-kappa-B) family. In a conventional activation pathway, I-kappa-B is phosphorylated by I-kappa-B kinases (IKKs) in response to different activators, subsequently degraded thus liberating the active NF-kappa-B complex which translocates to the nucleus. NF-kappa-B heterodimeric p65-p50 and RelB-p50 complexes are transcriptional activators. The NF-kappa-B p50-p50 homodimer is a transcriptional repressor, but can act as a transcriptional activator when associated with BCL3. NFKB1 appears to have dual functions such as cytoplasmic retention of attached NF-kappa-B proteins by p105 and generation of p50 by a cotranslational processing. The proteasome-mediated process ensures the production of both p50 and p105 and preserves their independent function, although processing of NFKB1/p105 also appears to occur post-translationally. p50 binds to the kappa-B consensus sequence 5'-GGRNNYYCC-3', located in the enhancer region of genes involved in immune response and acute phase reactions. In a complex with MAP3K8, NFKB1/p105 represses MAP3K8-induced MAPK signaling; active MAP3K8 is released by proteasome-dependent degradation of NFKB1/p105. Its function is as follows. P105 is the precursor of the active p50 subunit (Nuclear factor NF-kappa-B p50 subunit) of the nuclear factor NF-kappa-B. Acts as a cytoplasmic retention of attached NF-kappa-B proteins by p105. In terms of biological role, constitutes the active form, which associates with RELA/p65 to form the NF-kappa-B p65-p50 complex to form a transcription factor. Together with RELA/p65, binds to the kappa-B consensus sequence 5'-GGRNNYYCC-3', located in the enhancer region of genes involved in immune response and acute phase reactions. This chain is Nuclear factor NF-kappa-B p105 subunit (Nfkb1), found in Rattus norvegicus (Rat).